A 288-amino-acid chain; its full sequence is Acetyl-coenzyme A carboxylase carboxyl transferase subunit beta, chloroplastic (288 aa).

Residues Leu30–Lys288 form the CoA carboxyltransferase N-terminal domain. Positions 34, 37, 53, and 56 each coordinate Zn(2+). Residues Cys34–Cys56 form a C4-type zinc finger.

This sequence belongs to the AccD/PCCB family. As to quaternary structure, acetyl-CoA carboxylase is a heterohexamer composed of biotin carboxyl carrier protein, biotin carboxylase and 2 subunits each of ACCase subunit alpha and ACCase plastid-coded subunit beta (accD). The cofactor is Zn(2+).

The protein resides in the plastid. Its subcellular location is the chloroplast stroma. The catalysed reaction is N(6)-carboxybiotinyl-L-lysyl-[protein] + acetyl-CoA = N(6)-biotinyl-L-lysyl-[protein] + malonyl-CoA. It functions in the pathway lipid metabolism; malonyl-CoA biosynthesis; malonyl-CoA from acetyl-CoA: step 1/1. Component of the acetyl coenzyme A carboxylase (ACC) complex. Biotin carboxylase (BC) catalyzes the carboxylation of biotin on its carrier protein (BCCP) and then the CO(2) group is transferred by the transcarboxylase to acetyl-CoA to form malonyl-CoA. The sequence is that of Acetyl-coenzyme A carboxylase carboxyl transferase subunit beta, chloroplastic from Pyropia yezoensis (Susabi-nori).